The following is a 323-amino-acid chain: Aldo-keto reductase family 1 member C18 (323 aa).

NADP(+) contacts are provided by residues 20–24 and D50; that span reads GFGTY. The active-site Proton donor is the Y55. Residue H117 participates in substrate binding. Residues 166–167, Q190, 216–221, and 270–280 each bind NADP(+); these read SN, YGALGT, and KSFNEERIREN.

This sequence belongs to the aldo/keto reductase family. In terms of assembly, monomer. The N-terminus is blocked. Corpus luteum (large luteal cells).

It is found in the cytoplasm. The catalysed reaction is (17R,20S)-17,20-dihydroxypregn-4-en-3-one + NADP(+) = 17alpha-hydroxyprogesterone + NADPH + H(+). It carries out the reaction (17R,20S)-17,20-dihydroxypregn-4-en-3-one + NAD(+) = 17alpha-hydroxyprogesterone + NADH + H(+). Functionally, catalyzes the conversion of progesterone into 20-alpha-dihydroprogesterone (20 alpha-OHP). This Rattus norvegicus (Rat) protein is Aldo-keto reductase family 1 member C18 (Akr1c18).